A 249-amino-acid chain; its full sequence is tRNA pseudouridine synthase A (249 aa).

D53 (nucleophile) is an active-site residue. Substrate is bound at residue Y111.

It belongs to the tRNA pseudouridine synthase TruA family. Homodimer.

The enzyme catalyses uridine(38/39/40) in tRNA = pseudouridine(38/39/40) in tRNA. In terms of biological role, formation of pseudouridine at positions 38, 39 and 40 in the anticodon stem and loop of transfer RNAs. The protein is tRNA pseudouridine synthase A of Streptococcus pneumoniae serotype 2 (strain D39 / NCTC 7466).